The chain runs to 213 residues: MRIRNIRDAHLKINKAKNIIGVDNLKTKLDPKKFNALEIGSGKGGFIYQKAITNPGINYFGIEKNATVILKMINKSELLEQLTNLFIVHDDFALIDHEFPNACFDQIYLNFSDPWPKKRHAKKRLVDLAFLNKYQRILKADGIIEFKTDNDQLFNYAIEMINSLEQIKIIAYTNDLHSLDSSDALLKNNVITEYEQRFINLKKNINKIVFKFI.

S-adenosyl-L-methionine is bound by residues E38, E63, D91, and D113. D113 is a catalytic residue. Substrate-binding positions include K117, D149, and 192–195; that span reads TEYE.

The protein belongs to the class I-like SAM-binding methyltransferase superfamily. TrmB family.

The catalysed reaction is guanosine(46) in tRNA + S-adenosyl-L-methionine = N(7)-methylguanosine(46) in tRNA + S-adenosyl-L-homocysteine. It participates in tRNA modification; N(7)-methylguanine-tRNA biosynthesis. In terms of biological role, catalyzes the formation of N(7)-methylguanine at position 46 (m7G46) in tRNA. The chain is tRNA (guanine-N(7)-)-methyltransferase from Mycoplasmoides gallisepticum (strain R(low / passage 15 / clone 2)) (Mycoplasma gallisepticum).